We begin with the raw amino-acid sequence, 144 residues long: Nucleoside diphosphate kinase (144 aa).

Residues K11, F59, R87, T93, R104, and N114 each contribute to the ATP site. Catalysis depends on H117, which acts as the Pros-phosphohistidine intermediate.

The protein belongs to the NDK family. As to quaternary structure, homotetramer. It depends on Mg(2+) as a cofactor.

It localises to the cytoplasm. The enzyme catalyses a 2'-deoxyribonucleoside 5'-diphosphate + ATP = a 2'-deoxyribonucleoside 5'-triphosphate + ADP. It catalyses the reaction a ribonucleoside 5'-diphosphate + ATP = a ribonucleoside 5'-triphosphate + ADP. In terms of biological role, major role in the synthesis of nucleoside triphosphates other than ATP. The ATP gamma phosphate is transferred to the NDP beta phosphate via a ping-pong mechanism, using a phosphorylated active-site intermediate. This is Nucleoside diphosphate kinase from Aliivibrio fischeri (strain ATCC 700601 / ES114) (Vibrio fischeri).